The sequence spans 160 residues: Protein-export protein SecB (160 aa).

This sequence belongs to the SecB family. In terms of assembly, homotetramer, a dimer of dimers. One homotetramer interacts with 1 SecA dimer.

It is found in the cytoplasm. Functionally, one of the proteins required for the normal export of preproteins out of the cell cytoplasm. It is a molecular chaperone that binds to a subset of precursor proteins, maintaining them in a translocation-competent state. It also specifically binds to its receptor SecA. This Beijerinckia indica subsp. indica (strain ATCC 9039 / DSM 1715 / NCIMB 8712) protein is Protein-export protein SecB.